The chain runs to 123 residues: Small ribosomal subunit protein uS13 (123 aa).

The disordered stretch occupies residues 92 to 123; it reads HRRGLPVRGQKTKTNARTRKGPKKLVVSRKKK.

The protein belongs to the universal ribosomal protein uS13 family. Part of the 30S ribosomal subunit. Forms a loose heterodimer with protein S19. Forms two bridges to the 50S subunit in the 70S ribosome.

Its function is as follows. Located at the top of the head of the 30S subunit, it contacts several helices of the 16S rRNA. In the 70S ribosome it contacts the 23S rRNA (bridge B1a) and protein L5 of the 50S subunit (bridge B1b), connecting the 2 subunits; these bridges are implicated in subunit movement. Contacts the tRNAs in the A and P-sites. The polypeptide is Small ribosomal subunit protein uS13 (Clostridium tetani (strain Massachusetts / E88)).